A 331-amino-acid polypeptide reads, in one-letter code: Lactamase-like protein nscB (331 aa).

Zn(2+)-binding residues include His-106, His-108, Asp-110, and His-111. Asp-110 functions as the Proton donor/acceptor in the catalytic mechanism.

Belongs to the metallo-beta-lactamase superfamily. Zn(2+) serves as cofactor.

It participates in secondary metabolite biosynthesis. In terms of biological role, lactamase-like protein; part of the gene cluster that mediates the biosynthesis of neosartoricin B, a prenylated anthracenone that probably exhibits T-cell antiproliferative activity, suggestive of a physiological role as an immunosuppressive agent. The non-reducing polyketide synthase nscA probably synthesizes and cyclizes the decaketide backbone. The hydrolase nscB then mediates the product release through hydrolysis followed by spontaneous decarboxylation. The prenyltransferase nscD catalyzes the addition of the dimethylallyl group to the aromatic C5. The FAD-dependent monooxygenase nscC is then responsible for the stereospecific hydroxylation at C2. Neosartoricin B can be converted into two additional compounds neosartoricins C and D. Neosartoricin C is a spirocyclic compound that is cyclized through the attack of C3 hydroxyl on C14, followed by dehydration. On the other hand, neosartoricin D is a further cyclized compound in which attack of C2 on C14 in neosartoricin C results in the formation of the acetal-containing dioxabicyclo-octanone ring. Both of these compounds are novel and possibly represent related metabolites of the gene cluster. This Trichophyton equinum (strain ATCC MYA-4606 / CBS 127.97) (Horse ringworm fungus) protein is Lactamase-like protein nscB.